The primary structure comprises 38 residues: Large ribosomal subunit protein bL36A (38 aa).

This sequence belongs to the bacterial ribosomal protein bL36 family.

The sequence is that of Large ribosomal subunit protein bL36A from Pseudomonas aeruginosa (strain UCBPP-PA14).